The primary structure comprises 345 residues: Alanine racemase (345 aa).

Lys-33 functions as the Proton acceptor; specific for D-alanine in the catalytic mechanism. Lys-33 bears the N6-(pyridoxal phosphate)lysine mark. Position 128 (Arg-128) interacts with substrate. The active-site Proton acceptor; specific for L-alanine is Tyr-242. Position 291 (Met-291) interacts with substrate.

It belongs to the alanine racemase family. Pyridoxal 5'-phosphate serves as cofactor.

The catalysed reaction is L-alanine = D-alanine. The protein operates within amino-acid biosynthesis; D-alanine biosynthesis; D-alanine from L-alanine: step 1/1. Functionally, catalyzes the interconversion of L-alanine and D-alanine. May also act on other amino acids. The polypeptide is Alanine racemase (alr) (Ruegeria sp. (strain TM1040) (Silicibacter sp.)).